We begin with the raw amino-acid sequence, 169 residues long: Prolyl-tRNA synthetase associated domain-containing protein 1 (169 aa).

Belongs to the PRORSD1 family.

This is Prolyl-tRNA synthetase associated domain-containing protein 1 (Prorsd1) from Mus musculus (Mouse).